The primary structure comprises 378 residues: Ribosomal RNA large subunit methyltransferase G (378 aa).

It belongs to the methyltransferase superfamily. RlmG family.

The protein localises to the cytoplasm. The catalysed reaction is guanosine(1835) in 23S rRNA + S-adenosyl-L-methionine = N(2)-methylguanosine(1835) in 23S rRNA + S-adenosyl-L-homocysteine + H(+). Its function is as follows. Specifically methylates the guanine in position 1835 (m2G1835) of 23S rRNA. The chain is Ribosomal RNA large subunit methyltransferase G from Shigella dysenteriae serotype 1 (strain Sd197).